Consider the following 246-residue polypeptide: Orotidine 5'-phosphate decarboxylase (246 aa).

Residues Asp22, Lys44, 71–80, Thr130, Arg191, Gln201, Gly221, and Arg222 contribute to the substrate site; that span reads DLKYHDIPHT. Lys73 (proton donor) is an active-site residue.

It belongs to the OMP decarboxylase family. Type 1 subfamily. As to quaternary structure, homodimer.

It catalyses the reaction orotidine 5'-phosphate + H(+) = UMP + CO2. It functions in the pathway pyrimidine metabolism; UMP biosynthesis via de novo pathway; UMP from orotate: step 2/2. Its function is as follows. Catalyzes the decarboxylation of orotidine 5'-monophosphate (OMP) to uridine 5'-monophosphate (UMP). The protein is Orotidine 5'-phosphate decarboxylase of Neisseria meningitidis serogroup C (strain 053442).